The following is a 122-amino-acid chain: Small ribosomal subunit protein uS13 (122 aa).

Residues 93–122 (RLSLPVRGQRTKTNSRTRKGKRKTVAGKKK) form a disordered region. Residues 101 to 122 (QRTKTNSRTRKGKRKTVAGKKK) are compositionally biased toward basic residues.

It belongs to the universal ribosomal protein uS13 family. Part of the 30S ribosomal subunit. Forms a loose heterodimer with protein S19. Forms two bridges to the 50S subunit in the 70S ribosome.

Functionally, located at the top of the head of the 30S subunit, it contacts several helices of the 16S rRNA. In the 70S ribosome it contacts the 23S rRNA (bridge B1a) and protein L5 of the 50S subunit (bridge B1b), connecting the 2 subunits; these bridges are implicated in subunit movement. Contacts the tRNAs in the A and P-sites. The chain is Small ribosomal subunit protein uS13 from Chlamydia pneumoniae (Chlamydophila pneumoniae).